Consider the following 545-residue polypeptide: Signal peptide peptidase-like 4 (545 aa).

A signal peptide spans 1–25 (MGTSSPEMAAALLLVMAALAGVAAG). Topologically, residues 26 to 193 (GDIVHQDDEA…PDRPLVDTAE (168 aa)) are lumenal. N-linked (GlcNAc...) asparagine glycans are attached at residues Asn-81 and Asn-147. Residues 90 to 170 (PIDCCDPPTQ…PKDAGNDLQK (81 aa)) enclose the PA domain. Residues 194-214 (VFLWLMAVGTILCASYWSAWS) traverse the membrane as a helical segment. Residues 215 to 246 (AREAVIEQEKLLKDGHESSLNLEAGGSSGMVD) are Cytoplasmic-facing. The chain crosses the membrane as a helical span at residues 247 to 267 (INMTSAILFVVIASCFLIMLY). At 268–276 (KLMSHWFVE) the chain is on the lumenal side. A helical membrane pass occupies residues 277-297 (LLVVIFCIGGVEGLQTCLVAL). At 298 to 317 (LSRWFKPAAESFVKVPFFGA) the chain is on the cytoplasmic side. A helical membrane pass occupies residues 318 to 338 (VSYLTIAVCPFCIVFAVIWAV). Topologically, residues 339–343 (YRRMT) are lumenal. Residues 344 to 364 (YAWIGQDILGIALIVTVIQIV) form a helical membrane-spanning segment. The Cytoplasmic portion of the chain corresponds to 365–373 (RIPNLKVGS). The helical transmembrane segment at 374–394 (VLLSCSFLYDIFWVFISKMWF) threads the bilayer. Residue Asp-383 is part of the active site. Topologically, residues 395-427 (HESVMIVVARGDKTDEDGVPMLLKIPRMFDPWG) are lumenal. A helical membrane pass occupies residues 428–448 (GFSIIGFGDILLPGLLIAFAL). Residue Asp-436 is part of the active site. Residues 449–460 (RYDWAAKKTLQS) lie on the Cytoplasmic side of the membrane. Residues 461–481 (GYFLWSMVAYGSGLMITYVAL) traverse the membrane as a helical segment. The Lumenal portion of the chain corresponds to 482–485 (NLMD). The helical transmembrane segment at 486-506 (GHGQPALLYIVPFTLGTFIAL) threads the bilayer. Positions 490-492 (PAL) match the PAL motif. Residues 507-545 (GRKRGELRNLWTRGQPERVCTHMHMQPSPKDTNCDAVSS) are Cytoplasmic-facing.

This sequence belongs to the peptidase A22B family. Post-translationally, glycosylated.

The protein localises to the endosome membrane. Intramembrane-cleaving aspartic protease (I-CLiP) that cleaves type II membrane signal peptides in the hydrophobic plane of the membrane. This chain is Signal peptide peptidase-like 4 (SPPL4), found in Oryza sativa subsp. japonica (Rice).